The primary structure comprises 235 residues: Large ribosomal subunit protein uL1 (235 aa).

The protein belongs to the universal ribosomal protein uL1 family. Part of the 50S ribosomal subunit.

Binds directly to 23S rRNA. The L1 stalk is quite mobile in the ribosome, and is involved in E site tRNA release. In terms of biological role, protein L1 is also a translational repressor protein, it controls the translation of the L11 operon by binding to its mRNA. The protein is Large ribosomal subunit protein uL1 of Lawsonia intracellularis (strain PHE/MN1-00).